The primary structure comprises 202 residues: Hypoxanthine-guanine phosphoribosyltransferase (202 aa).

Diphosphate-binding residues include K66 and G67. E122 and D123 together coordinate Mg(2+). D126 acts as the Proton acceptor in catalysis. Residues K154, 175–176, and D182 each bind GMP; that span reads FV. Residue R188 participates in diphosphate binding.

Belongs to the purine/pyrimidine phosphoribosyltransferase family. Mg(2+) serves as cofactor.

It localises to the cytoplasm. It catalyses the reaction IMP + diphosphate = hypoxanthine + 5-phospho-alpha-D-ribose 1-diphosphate. The catalysed reaction is GMP + diphosphate = guanine + 5-phospho-alpha-D-ribose 1-diphosphate. Its pathway is purine metabolism; IMP biosynthesis via salvage pathway; IMP from hypoxanthine: step 1/1. The protein operates within purine metabolism; GMP biosynthesis via salvage pathway; GMP from guanine: step 1/1. Functionally, purine salvage pathway enzyme that catalyzes the transfer of the ribosyl-5-phosphate group from 5-phospho-alpha-D-ribose 1-diphosphate (PRPP) to the N9 position of the 6-oxopurines hypoxanthine and guanine to form the corresponding ribonucleotides IMP (inosine 5'-monophosphate) and GMP (guanosine 5'-monophosphate), with the release of PPi. The protein is Hypoxanthine-guanine phosphoribosyltransferase (hpt) of Mycobacterium tuberculosis (strain CDC 1551 / Oshkosh).